Here is a 355-residue protein sequence, read N- to C-terminus: MAAQEEPAQPGDSLATLKSESDTLKSKLEEERAKLHDVELHQVAEKIEALGQFVMKTRRTLKGHGNKVLCMDWCKDKRRIVSSSQDGKVIVWDAFTTNKEHAVTMPCTWVMACAYAPSGCAVACGGLDNKCSVYPLSLDKNENLAAKKKSVAMHTNYLSACCFTNSDMQILTSSGDGTCALWDVESGQMLQSFHGHAADVLCLDLAPSETGNTFVSGGCDKKACVWDMRTGQCVQSFESHDSDINSVRYYPSGDAFASGSDDATCRLYDLRADREVAIYSKESIIFGASSVDFSLSGRLLFGGYNDYTINVWDVLKGARVSILFGHENRVSTLRVSPDGTAFCSGSWDHTLRIWA.

The tract at residues 1-23 is disordered; it reads MAAQEEPAQPGDSLATLKSESDT. WD repeat units lie at residues 63 to 102, 105 to 144, 153 to 194, 195 to 238, 239 to 278, 280 to 322, and 325 to 355; these read GHGNKVLCMDWCKDKRRIVSSSQDGKVIVWDAFTTNKEHA, MPCTWVMACAYAPSGCAVACGGLDNKCSVYPLSLDKNENL, MHTN…QSFH, GHAA…QSFE, SHDSDINSVRYYPSGDAFASGSDDATCRLYDLRADREVAI, SKES…RVSI, and GHENRVSTLRVSPDGTAFCSGSWDHTLRIWA.

The protein belongs to the WD repeat G protein beta family. May interact with RGS9; this interaction stabilizes both proteins and increases RGS9 GTPase-activating protein (GAP) activity, hence accelerating the deactivation of D(2) dopamine receptor-mediated signaling.

The protein localises to the membrane. Functionally, enhances GTPase-activating protein (GAP) activity of regulator of G protein signaling (RGS) proteins, such as RGS7 and RGS9, hence involved in the termination of the signaling initiated by the G protein coupled receptors (GPCRs) by accelerating the GTP hydrolysis on the G-alpha subunits, thereby promoting their inactivation. Increases RGS7 GTPase-activating protein (GAP) activity, thereby regulating mood and cognition. Increases RGS9 GTPase-activating protein (GAP) activity, hence contributes to the deactivation of G protein signaling initiated by D(2) dopamine receptors. Along with gnb5b, plays an important role in neuronal signaling, including in the parasympathetic, but not sympathetic, control of heart rate. This chain is Guanine nucleotide-binding protein subunit beta-5a, found in Danio rerio (Zebrafish).